The chain runs to 330 residues: Fructose-1,6-bisphosphatase class 1 (330 aa).

Mg(2+)-binding residues include glutamate 84, aspartate 103, leucine 105, and aspartate 106. Residues 106 to 109 (DGSS), asparagine 196, and lysine 262 contribute to the substrate site. Glutamate 268 contributes to the Mg(2+) binding site.

This sequence belongs to the FBPase class 1 family. As to quaternary structure, homotetramer. Mg(2+) serves as cofactor.

It localises to the cytoplasm. It catalyses the reaction beta-D-fructose 1,6-bisphosphate + H2O = beta-D-fructose 6-phosphate + phosphate. Its pathway is carbohydrate biosynthesis; gluconeogenesis. In Shewanella sp. (strain ANA-3), this protein is Fructose-1,6-bisphosphatase class 1.